The chain runs to 940 residues: UvrABC system protein A (940 aa).

31 to 38 (GLSGSGKS) contacts ATP. The C4-type zinc finger occupies 252-279 (CPHCGYSMQELEPRLFSFNNPAGACGTC). ABC transporter domains lie at 309–586 (WDQK…PDSL) and 606–936 (RDKN…RFLK). An ATP-binding site is contributed by 639–646 (GVSGSGKS). The segment at 739-765 (CEACQGDGVIKVEMHFLPDVYVPCDVC) adopts a C4-type zinc-finger fold.

This sequence belongs to the ABC transporter superfamily. UvrA family. As to quaternary structure, forms a heterotetramer with UvrB during the search for lesions.

Its subcellular location is the cytoplasm. Its function is as follows. The UvrABC repair system catalyzes the recognition and processing of DNA lesions. UvrA is an ATPase and a DNA-binding protein. A damage recognition complex composed of 2 UvrA and 2 UvrB subunits scans DNA for abnormalities. When the presence of a lesion has been verified by UvrB, the UvrA molecules dissociate. This chain is UvrABC system protein A, found in Vibrio vulnificus (strain CMCP6).